We begin with the raw amino-acid sequence, 338 residues long: Eukaryotic translation initiation factor 3 subunit H (338 aa).

An MPN domain is found at 22–154; sequence VQCDGLAVMK…LKAYRLTPQA (133 aa).

Belongs to the eIF-3 subunit H family. As to quaternary structure, component of the eukaryotic translation initiation factor 3 (eIF-3) complex. The eIF-3 complex interacts with pix. Interacts with mxt.

The protein localises to the cytoplasm. In terms of biological role, component of the eukaryotic translation initiation factor 3 (eIF-3) complex, which is involved in protein synthesis of a specialized repertoire of mRNAs and, together with other initiation factors, stimulates binding of mRNA and methionyl-tRNAi to the 40S ribosome. The eIF-3 complex specifically targets and initiates translation of a subset of mRNAs involved in cell proliferation. The chain is Eukaryotic translation initiation factor 3 subunit H from Drosophila sechellia (Fruit fly).